The sequence spans 473 residues: UDP-N-acetylmuramate--L-alanine ligase (473 aa).

119–125 (GTHGKTT) is an ATP binding site.

It belongs to the MurCDEF family.

Its subcellular location is the cytoplasm. It catalyses the reaction UDP-N-acetyl-alpha-D-muramate + L-alanine + ATP = UDP-N-acetyl-alpha-D-muramoyl-L-alanine + ADP + phosphate + H(+). The protein operates within cell wall biogenesis; peptidoglycan biosynthesis. Its function is as follows. Cell wall formation. In Caulobacter vibrioides (strain NA1000 / CB15N) (Caulobacter crescentus), this protein is UDP-N-acetylmuramate--L-alanine ligase.